A 293-amino-acid chain; its full sequence is Nitrogenase iron protein (293 aa).

10 to 17 (GKGGIGKS) lines the ATP pocket. Cysteine 98 provides a ligand contact to [4Fe-4S] cluster. Position 101 is an ADP-ribosylarginine; by dinitrogenase reductase ADP-ribosyltransferase (arginine 101). Cysteine 133 contacts [4Fe-4S] cluster.

It belongs to the NifH/BchL/ChlL family. As to quaternary structure, homodimer. Requires [4Fe-4S] cluster as cofactor. In terms of processing, the reversible ADP-ribosylation of Arg-101 inactivates the nitrogenase reductase and regulates nitrogenase activity.

The catalysed reaction is N2 + 8 reduced [2Fe-2S]-[ferredoxin] + 16 ATP + 16 H2O = H2 + 8 oxidized [2Fe-2S]-[ferredoxin] + 2 NH4(+) + 16 ADP + 16 phosphate + 6 H(+). Its function is as follows. The key enzymatic reactions in nitrogen fixation are catalyzed by the nitrogenase complex, which has 2 components: the iron protein and the molybdenum-iron protein. In Pectobacterium atrosepticum (strain SCRI 1043 / ATCC BAA-672) (Erwinia carotovora subsp. atroseptica), this protein is Nitrogenase iron protein.